The sequence spans 120 residues: uncharacterized protein (120 aa).

The protein resides in the mitochondrion. This is an uncharacterized protein from Arabidopsis thaliana (Mouse-ear cress).